Reading from the N-terminus, the 106-residue chain is ATP-dependent Clp protease adapter protein ClpS (106 aa).

Belongs to the ClpS family. Binds to the N-terminal domain of the chaperone ClpA.

Functionally, involved in the modulation of the specificity of the ClpAP-mediated ATP-dependent protein degradation. The sequence is that of ATP-dependent Clp protease adapter protein ClpS from Aliivibrio salmonicida (strain LFI1238) (Vibrio salmonicida (strain LFI1238)).